Consider the following 364-residue polypeptide: UDP-N-acetylglucosamine--N-acetylmuramyl-(pentapeptide) pyrophosphoryl-undecaprenol N-acetylglucosamine transferase (364 aa).

UDP-N-acetyl-alpha-D-glucosamine is bound by residues 16–18 (TGG), Asn-128, Arg-166, Ser-195, Ile-249, and Gln-294.

It belongs to the glycosyltransferase 28 family. MurG subfamily.

The protein resides in the cell inner membrane. It carries out the reaction di-trans,octa-cis-undecaprenyl diphospho-N-acetyl-alpha-D-muramoyl-L-alanyl-D-glutamyl-meso-2,6-diaminopimeloyl-D-alanyl-D-alanine + UDP-N-acetyl-alpha-D-glucosamine = di-trans,octa-cis-undecaprenyl diphospho-[N-acetyl-alpha-D-glucosaminyl-(1-&gt;4)]-N-acetyl-alpha-D-muramoyl-L-alanyl-D-glutamyl-meso-2,6-diaminopimeloyl-D-alanyl-D-alanine + UDP + H(+). It functions in the pathway cell wall biogenesis; peptidoglycan biosynthesis. Cell wall formation. Catalyzes the transfer of a GlcNAc subunit on undecaprenyl-pyrophosphoryl-MurNAc-pentapeptide (lipid intermediate I) to form undecaprenyl-pyrophosphoryl-MurNAc-(pentapeptide)GlcNAc (lipid intermediate II). The polypeptide is UDP-N-acetylglucosamine--N-acetylmuramyl-(pentapeptide) pyrophosphoryl-undecaprenol N-acetylglucosamine transferase (Chromohalobacter salexigens (strain ATCC BAA-138 / DSM 3043 / CIP 106854 / NCIMB 13768 / 1H11)).